A 277-amino-acid polypeptide reads, in one-letter code: Ribosomal RNA small subunit methyltransferase A (277 aa).

6 residues coordinate S-adenosyl-L-methionine: asparagine 27, leucine 29, glycine 54, glutamate 75, aspartate 95, and asparagine 118.

This sequence belongs to the class I-like SAM-binding methyltransferase superfamily. rRNA adenine N(6)-methyltransferase family. RsmA subfamily.

The protein resides in the cytoplasm. The catalysed reaction is adenosine(1518)/adenosine(1519) in 16S rRNA + 4 S-adenosyl-L-methionine = N(6)-dimethyladenosine(1518)/N(6)-dimethyladenosine(1519) in 16S rRNA + 4 S-adenosyl-L-homocysteine + 4 H(+). Functionally, specifically dimethylates two adjacent adenosines (A1518 and A1519) in the loop of a conserved hairpin near the 3'-end of 16S rRNA in the 30S particle. May play a critical role in biogenesis of 30S subunits. The protein is Ribosomal RNA small subunit methyltransferase A of Chlamydia trachomatis serovar L2 (strain ATCC VR-902B / DSM 19102 / 434/Bu).